Reading from the N-terminus, the 491-residue chain is MEKLWLNSMFSNGKLEHKYRLSRSMDSLGPIRYSSGSEDPVLNAMDNKVSSWNDSGSCNFSNVEHFLDIIDIWSFISDDTFLVRDSNGDSFSIYFDIENQIFEIDNDSTFINELESSFSSYLDSSSMNSGSKKSSRYYYRYMYDTQSSWNNHINSCIDSYLRYEISIDSYISGETHNYSDNYVYNFICNESISGNESRNSAIRTSVNGSDFNIRGRSNDLDINKKYRHLWVQCENCYGLNYKQFFRSRLNICEHCGYHLKMSSSERIELLIDPGTWDPLDENMVSTDPIEFHSEEEPYRDRIDSYQKKTGLTEAVQTGIGELNGIPIAIGVMDFQFMGGSMGSVVGEKITRLIEYATNKSLPVIIVCASGGARMQEGSLSLMQMAKISSALYNYQLNKKLFYVAILTSPTTGGVTASFGMLGDIIIAEPNAYIAFAGKRVIEQTLNKTVPDGSQAAEYLFQKGLFDLIVPRNLLKGVLGELFQLHGFFPLT.

Residues 229–491 (LWVQCENCYG…FQLHGFFPLT (263 aa)) enclose the CoA carboxyltransferase N-terminal domain. Zn(2+)-binding residues include C233, C236, C252, and C255. Residues 233–255 (CENCYGLNYKQFFRSRLNICEHC) form a C4-type zinc finger.

Belongs to the AccD/PCCB family. As to quaternary structure, acetyl-CoA carboxylase is a heterohexamer composed of biotin carboxyl carrier protein, biotin carboxylase and 2 subunits each of ACCase subunit alpha and ACCase plastid-coded subunit beta (accD). Zn(2+) is required as a cofactor.

The protein resides in the plastid. Its subcellular location is the chloroplast stroma. It catalyses the reaction N(6)-carboxybiotinyl-L-lysyl-[protein] + acetyl-CoA = N(6)-biotinyl-L-lysyl-[protein] + malonyl-CoA. It participates in lipid metabolism; malonyl-CoA biosynthesis; malonyl-CoA from acetyl-CoA: step 1/1. Component of the acetyl coenzyme A carboxylase (ACC) complex. Biotin carboxylase (BC) catalyzes the carboxylation of biotin on its carrier protein (BCCP) and then the CO(2) group is transferred by the transcarboxylase to acetyl-CoA to form malonyl-CoA. The protein is Acetyl-coenzyme A carboxylase carboxyl transferase subunit beta, chloroplastic of Lemna minor (Common duckweed).